Consider the following 214-residue polypeptide: Neuromodulin (214 aa).

The tract at residues 1–214 (MLCCMRRTKQ…EEAKPDQENA (214 aa)) is disordered. Residues Cys3 and Cys4 are each lipidated (S-palmitoyl cysteine). Composition is skewed to basic and acidic residues over residues 9–33 (KQVE…DKAH), 52–88 (MKDD…KTEE), and 95–122 (LEVK…KDTP). Residues 32–61 (AHKAATKIQASFRGHIIRKKMKDDKKDDNS) enclose the IQ domain. Residues 124–133 (EENQASAESE) show a composition bias toward low complexity. Basic and acidic residues-rich tracts occupy residues 150–160 (QAKEESKKADV), 168–193 (ASEK…EIKA), and 205–214 (EEAKPDQENA).

It belongs to the neuromodulin family. In terms of assembly, binds calmodulin with a greater affinity in the absence of Ca(2+) than in its presence. Post-translationally, palmitoylated. Palmitoylation is essential for plasma membrane association.

It localises to the cell membrane. Its subcellular location is the cell projection. It is found in the growth cone membrane. The protein resides in the synapse. The protein localises to the filopodium membrane. Its function is as follows. This protein is associated with nerve growth. It is a major component of the motile 'growth cones' that form the tips of elongating axons. Plays a role in axonal and dendritic filopodia induction. The polypeptide is Neuromodulin (gap43) (Xenopus laevis (African clawed frog)).